Reading from the N-terminus, the 108-residue chain is Somatoliberin (108 aa).

The N-terminal stretch at 1–20 (MPLWVFFFVILTLSNSSHCS) is a signal peptide. Residues 21-31 (PPPPLTLRMRR) constitute a propeptide that is removed on maturation. At Leu75 the chain carries Leucine amide. Positions 78–108 (QVDSMWAEQKQMELESILVALLQKHSRNSQG) are excised as a propeptide.

The protein belongs to the glucagon family.

The protein localises to the secreted. In terms of biological role, GRF is released by the hypothalamus and acts on the adenohypophyse to stimulate the secretion of growth hormone. This is Somatoliberin (GHRH) from Homo sapiens (Human).